The chain runs to 492 residues: Catalase-3 (492 aa).

Active-site residues include His-65 and Asn-138. Position 348 (Tyr-348) interacts with heme.

Belongs to the catalase family. As to quaternary structure, homotetramer and heterotetramer. At least six or seven isozymes are produced from a mixture of 3 gene products. Interacts with NCA1. Interacts with LSD1. It depends on heme as a cofactor.

It localises to the peroxisome. It catalyses the reaction 2 H2O2 = O2 + 2 H2O. Functionally, occurs in almost all aerobically respiring organisms and serves to protect cells from the toxic effects of hydrogen peroxide. This Arabidopsis thaliana (Mouse-ear cress) protein is Catalase-3 (CAT3).